A 144-amino-acid polypeptide reads, in one-letter code: Large ribosomal subunit protein uL15 (144 aa).

Positions 1 to 12 (MRLNTLSPSLGS) are enriched in polar residues. Positions 1 to 51 (MRLNTLSPSLGSRKNHKRLGRGIGSGFGKTAGRGHKGQKSRSGGHVNRGFE) are disordered. Gly residues predominate over residues 21–31 (RGIGSGFGKTA).

Belongs to the universal ribosomal protein uL15 family. As to quaternary structure, part of the 50S ribosomal subunit.

In terms of biological role, binds to the 23S rRNA. In Buchnera aphidicola subsp. Schizaphis graminum (strain Sg), this protein is Large ribosomal subunit protein uL15.